The chain runs to 591 residues: Proteasome-associated ATPase (591 aa).

The stretch at 8–77 (DSVAAARELE…LREEVDRLGQ (70 aa)) forms a coiled coil. 278-283 (GCGKTL) contacts ATP. The segment at 590 to 591 (YL) is docks into pockets in the proteasome alpha-ring.

It belongs to the AAA ATPase family. Homohexamer. Assembles into a hexameric ring structure that caps the 20S proteasome core. Strongly interacts with the prokaryotic ubiquitin-like protein Pup through a hydrophobic interface; the interacting region of ARC lies in its N-terminal coiled-coil domain. There is one Pup binding site per ARC hexamer ring. Upon ATP-binding, the C-terminus of ARC interacts with the alpha-rings of the proteasome core, possibly by binding to the intersubunit pockets.

The protein operates within protein degradation; proteasomal Pup-dependent pathway. ATPase which is responsible for recognizing, binding, unfolding and translocation of pupylated proteins into the bacterial 20S proteasome core particle. May be essential for opening the gate of the 20S proteasome via an interaction with its C-terminus, thereby allowing substrate entry and access to the site of proteolysis. Thus, the C-termini of the proteasomal ATPase may function like a 'key in a lock' to induce gate opening and therefore regulate proteolysis. The chain is Proteasome-associated ATPase from Rhodococcus jostii (strain RHA1).